The primary structure comprises 90 residues: Probable small nuclear ribonucleoprotein E (90 aa).

Residues V14–E89 enclose the Sm domain.

Belongs to the snRNP Sm proteins family. Core component of the spliceosomal U1, U2, U4 and U5 small nuclear ribonucleoproteins (snRNPs), the building blocks of the spliceosome.

The protein resides in the nucleus. Its subcellular location is the cytoplasm. The protein localises to the cytosol. Its function is as follows. Plays a role in pre-mRNA splicing as a core component of the spliceosomal U1, U2, U4 and U5 small nuclear ribonucleoproteins (snRNPs), the building blocks of the spliceosome. The polypeptide is Probable small nuclear ribonucleoprotein E (snr-6) (Caenorhabditis briggsae).